The following is a 507-amino-acid chain: Histidine ammonia-lyase (507 aa).

The 5-imidazolinone (Ala-Gly) cross-link spans 141-143; it reads ASG. Ser-142 is modified (2,3-didehydroalanine (Ser)).

This sequence belongs to the PAL/histidase family. In terms of processing, contains an active site 4-methylidene-imidazol-5-one (MIO), which is formed autocatalytically by cyclization and dehydration of residues Ala-Ser-Gly.

It localises to the cytoplasm. It catalyses the reaction L-histidine = trans-urocanate + NH4(+). It functions in the pathway amino-acid degradation; L-histidine degradation into L-glutamate; N-formimidoyl-L-glutamate from L-histidine: step 1/3. This Cereibacter sphaeroides (strain ATCC 17029 / ATH 2.4.9) (Rhodobacter sphaeroides) protein is Histidine ammonia-lyase.